Reading from the N-terminus, the 181-residue chain is Probable N-acetyltransferase YjcK (181 aa).

In terms of domain architecture, N-acetyltransferase spans 7–172; sequence IYVRPLEVTD…NGVWEDHQVL (166 aa).

Belongs to the acetyltransferase family. RimJ subfamily.

The catalysed reaction is an N-terminal L-alpha-aminoacyl-[protein] + acetyl-CoA = N-terminal N(alpha)-acetyl-L-alpha-aminoacyl-[protein] + CoA + H(+). In terms of biological role, probable N-terminal protein acetyltransferase. This chain is Probable N-acetyltransferase YjcK (yjcK), found in Bacillus subtilis (strain 168).